A 249-amino-acid chain; its full sequence is Aquaporin TIP2-1 (249 aa).

A run of 2 helical transmembrane segments spans residues 20–40 (AYVA…GSAI) and 54–74 (AGLV…VSVA). The NPA 1 motif lies at 83–85 (NPA). 3 consecutive transmembrane segments (helical) span residues 102–122 (VFYW…LGFV), 141–161 (GVVF…ATAA), and 168–188 (LGTI…LAAG). An NPA 2 motif is present at residues 196 to 198 (NPA). A helical membrane pass occupies residues 217 to 237 (WVGPLVGGGLAGLVYGDVFIG).

This sequence belongs to the MIP/aquaporin (TC 1.A.8) family. TIP (TC 1.A.8.10) subfamily.

The protein resides in the vacuole membrane. Functionally, aquaporins facilitate the transport of water and small neutral solutes across cell membranes. This is Aquaporin TIP2-1 (TIP2-1) from Zea mays (Maize).